The chain runs to 275 residues: tRNA pseudouridine synthase A (275 aa).

The active-site Nucleophile is aspartate 56. A substrate-binding site is contributed by tyrosine 109.

The protein belongs to the tRNA pseudouridine synthase TruA family.

The enzyme catalyses uridine(38/39/40) in tRNA = pseudouridine(38/39/40) in tRNA. Formation of pseudouridine at positions 38, 39 and 40 in the anticodon stem and loop of transfer RNAs. This chain is tRNA pseudouridine synthase A, found in Methanothermobacter thermautotrophicus (strain ATCC 29096 / DSM 1053 / JCM 10044 / NBRC 100330 / Delta H) (Methanobacterium thermoautotrophicum).